The sequence spans 125 residues: Small ribosomal subunit protein uS12 (125 aa).

At Asp-89 the chain carries 3-methylthioaspartic acid.

This sequence belongs to the universal ribosomal protein uS12 family. In terms of assembly, part of the 30S ribosomal subunit. Contacts proteins S8 and S17. May interact with IF1 in the 30S initiation complex.

In terms of biological role, with S4 and S5 plays an important role in translational accuracy. Interacts with and stabilizes bases of the 16S rRNA that are involved in tRNA selection in the A site and with the mRNA backbone. Located at the interface of the 30S and 50S subunits, it traverses the body of the 30S subunit contacting proteins on the other side and probably holding the rRNA structure together. The combined cluster of proteins S8, S12 and S17 appears to hold together the shoulder and platform of the 30S subunit. The sequence is that of Small ribosomal subunit protein uS12 from Clostridium acetobutylicum (strain ATCC 824 / DSM 792 / JCM 1419 / IAM 19013 / LMG 5710 / NBRC 13948 / NRRL B-527 / VKM B-1787 / 2291 / W).